The primary structure comprises 116 residues: CDKN2AIP N-terminal-like protein (116 aa).

Methionine 1 is subject to N-acetylmethionine. The 93-residue stretch at 24–116 (AEQFRSYSES…RSELMKKHQS (93 aa)) folds into the XRN2-binding (XTBD) domain.

The protein belongs to the CARF family. As to quaternary structure, interacts with XRN2; the interaction is direct.

The sequence is that of CDKN2AIP N-terminal-like protein (CDKN2AIPNL) from Bos taurus (Bovine).